A 577-amino-acid chain; its full sequence is 2-hydroxyacyl-CoA lyase (577 aa).

Glutamate 59 contacts thiamine diphosphate. The interval 412-493 is thiamine pyrophosphate binding; that stretch reads TMDVGRAVLV…VIVFNNNGVY (82 aa). Residues aspartate 462 and asparagine 489 each contribute to the Mg(2+) site.

Belongs to the TPP enzyme family. In terms of assembly, homotetramer. Requires Mg(2+) as cofactor. It depends on thiamine diphosphate as a cofactor.

The catalysed reaction is an (R)-2-hydroxy-long-chain-fatty acyl-CoA = a long-chain fatty aldehyde + formyl-CoA. It carries out the reaction a 2-hydroxy-3-methyl fatty acyl-CoA = a 2-methyl-branched fatty aldehyde + formyl-CoA. In terms of biological role, catalyzes a carbon-carbon cleavage reaction; cleaves a 2-hydroxy-3-methylacyl-CoA into formyl-CoA and a 2-methyl-branched fatty aldehyde. The polypeptide is 2-hydroxyacyl-CoA lyase (Oryza sativa subsp. japonica (Rice)).